The following is a 271-amino-acid chain: 3-methyl-2-oxobutanoate hydroxymethyltransferase (271 aa).

The Mg(2+) site is built by D51 and D90. 3-methyl-2-oxobutanoate contacts are provided by residues 51–52 (DS), D90, and K118. E120 provides a ligand contact to Mg(2+). The active-site Proton acceptor is E186.

Belongs to the PanB family. In terms of assembly, homodecamer; pentamer of dimers. Mg(2+) serves as cofactor.

The protein localises to the cytoplasm. The catalysed reaction is 3-methyl-2-oxobutanoate + (6R)-5,10-methylene-5,6,7,8-tetrahydrofolate + H2O = 2-dehydropantoate + (6S)-5,6,7,8-tetrahydrofolate. It participates in cofactor biosynthesis; (R)-pantothenate biosynthesis; (R)-pantoate from 3-methyl-2-oxobutanoate: step 1/2. In terms of biological role, catalyzes the reversible reaction in which hydroxymethyl group from 5,10-methylenetetrahydrofolate is transferred onto alpha-ketoisovalerate to form ketopantoate. The protein is 3-methyl-2-oxobutanoate hydroxymethyltransferase of Xanthomonas axonopodis pv. citri (strain 306).